Reading from the N-terminus, the 87-residue chain is MYVIMVYDVNQRRINKVLNTARKYLEWIQNSVLEGEITEAKFEMLKREIEIIINEEEDSVIFYIMRTTKYSERQILGIEKNKREQIL.

Residue D8 coordinates Mg(2+).

It belongs to the CRISPR-associated endoribonuclease Cas2 protein family. In terms of assembly, homodimer, forms a heterotetramer with a Cas1 homodimer. The cofactor is Mg(2+).

Functionally, CRISPR (clustered regularly interspaced short palindromic repeat), is an adaptive immune system that provides protection against mobile genetic elements (viruses, transposable elements and conjugative plasmids). CRISPR clusters contain sequences complementary to antecedent mobile elements and target invading nucleic acids. CRISPR clusters are transcribed and processed into CRISPR RNA (crRNA). Functions as a ssRNA-specific endoribonuclease. Involved in the integration of spacer DNA into the CRISPR cassette. This is CRISPR-associated endoribonuclease Cas2 from Dictyoglomus turgidum (strain DSM 6724 / Z-1310).